The primary structure comprises 116 residues: UPF0329 protein ECU05_1650 (116 aa).

Belongs to the UPF0329 family.

The chain is UPF0329 protein ECU05_1650 from Encephalitozoon cuniculi (strain GB-M1) (Microsporidian parasite).